A 445-amino-acid polypeptide reads, in one-letter code: Argininosuccinate synthase (445 aa).

Residues 17-25 and Ala43 contribute to the ATP site; that span reads AFSGGLDTS. L-citrulline is bound at residue Tyr99. ATP-binding residues include Gly129 and Thr131. The L-aspartate site is built by Thr131, Asn135, and Asp136. An L-citrulline-binding site is contributed by Asn135. Asp136 is an ATP binding site. Residues Arg139 and Ser192 each contribute to the L-citrulline site. Residue Asp194 participates in ATP binding. Residues Thr201, Glu203, and Glu280 each contribute to the L-citrulline site.

It belongs to the argininosuccinate synthase family. Type 2 subfamily. As to quaternary structure, homotetramer.

The protein resides in the cytoplasm. The enzyme catalyses L-citrulline + L-aspartate + ATP = 2-(N(omega)-L-arginino)succinate + AMP + diphosphate + H(+). The protein operates within amino-acid biosynthesis; L-arginine biosynthesis; L-arginine from L-ornithine and carbamoyl phosphate: step 2/3. The sequence is that of Argininosuccinate synthase (argG) from Ralstonia nicotianae (strain ATCC BAA-1114 / GMI1000) (Ralstonia solanacearum).